A 429-amino-acid chain; its full sequence is 3-phosphoshikimate 1-carboxyvinyltransferase (429 aa).

Positions 11, 12, and 16 each coordinate 3-phosphoshikimate. K11 contributes to the phosphoenolpyruvate binding site. Residues G82 and R110 each coordinate phosphoenolpyruvate. Positions 155, 157, 302, and 329 each coordinate 3-phosphoshikimate. Q157 provides a ligand contact to phosphoenolpyruvate. Residue D302 is the Proton acceptor of the active site. 2 residues coordinate phosphoenolpyruvate: R333 and R385.

It belongs to the EPSP synthase family. Monomer.

The protein localises to the cytoplasm. It carries out the reaction 3-phosphoshikimate + phosphoenolpyruvate = 5-O-(1-carboxyvinyl)-3-phosphoshikimate + phosphate. It functions in the pathway metabolic intermediate biosynthesis; chorismate biosynthesis; chorismate from D-erythrose 4-phosphate and phosphoenolpyruvate: step 6/7. Functionally, catalyzes the transfer of the enolpyruvyl moiety of phosphoenolpyruvate (PEP) to the 5-hydroxyl of shikimate-3-phosphate (S3P) to produce enolpyruvyl shikimate-3-phosphate and inorganic phosphate. This Helicobacter pylori (strain P12) protein is 3-phosphoshikimate 1-carboxyvinyltransferase.